The sequence spans 486 residues: MSKDIRVRYAPSPTGLLHIGNARTALFNYLYARHHGGTFLIRIEDTDRKRHVEDGERSQLENLRWLGMDWDESPESHENYRQSERLDLYQKYIDQLLAEGKAYKSYVTEEELVAERERQEVAGETPRYINEYLGMSEEEKAAYIAEREAAGIIPTVRLAVNESGIYKWHDMVKGDIEFEGGNIGGDWIIQKKDGYPTYNFAVVIDDHDMQISHVIRGDDHIANTPKQLMVYEALGWEAPEFGHMTLIINSETGKKLSKRDTNTLQFIEDYRKKGYLPEAVFNFIALLGWNPGGEDEIFSREELIKLFDENRLSKSPAAFDQKKLDWMSNDYIKNADLETIFEMAKPFLEEAGRLTDKAEKLVELYKPQMKSVDEIIPLTDLFFSDFPELTEAEREVMTGETVPTVLEAFKAKLEAMTDDKFVTENIFPQIKAVQKETGIKGKNLFMPIRIAVSGEMHGPELPDTIFLLGREKSIQHIENMLKEISK.

The 'HIGH' region motif lies at 11-21; the sequence is PSPTGLLHIGN. The short motif at 255–259 is the 'KMSKS' region element; the sequence is KLSKR. Lys-258 is an ATP binding site.

Belongs to the class-I aminoacyl-tRNA synthetase family. Glutamate--tRNA ligase type 1 subfamily. Monomer.

It is found in the cytoplasm. The catalysed reaction is tRNA(Glu) + L-glutamate + ATP = L-glutamyl-tRNA(Glu) + AMP + diphosphate. Functionally, catalyzes the attachment of glutamate to tRNA(Glu) in a two-step reaction: glutamate is first activated by ATP to form Glu-AMP and then transferred to the acceptor end of tRNA(Glu). This chain is Glutamate--tRNA ligase, found in Streptococcus pneumoniae (strain Hungary19A-6).